We begin with the raw amino-acid sequence, 81 residues long: Short neurotoxin 1 (81 aa).

A signal peptide spans 1-21; sequence MKTLLLTLVVVTIVCLDLGYT. 4 disulfide bridges follow: Cys24–Cys43, Cys38–Cys60, Cys62–Cys73, and Cys74–Cys79.

Belongs to the three-finger toxin family. Short-chain subfamily. Type I alpha-neurotoxin sub-subfamily. In terms of tissue distribution, expressed by the venom gland.

It localises to the secreted. Binds to muscle nicotinic acetylcholine receptor (nAChR) and inhibit acetylcholine from binding to the receptor, thereby impairing neuromuscular transmission. This chain is Short neurotoxin 1, found in Tropidechis carinatus (Australian rough-scaled snake).